The sequence spans 235 residues: Endonuclease V (235 aa).

Mg(2+)-binding residues include aspartate 47 and aspartate 115.

Belongs to the endonuclease V family. The cofactor is Mg(2+).

The protein localises to the cytoplasm. It catalyses the reaction Endonucleolytic cleavage at apurinic or apyrimidinic sites to products with a 5'-phosphate.. DNA repair enzyme involved in the repair of deaminated bases. Selectively cleaves double-stranded DNA at the second phosphodiester bond 3' to a deoxyinosine leaving behind the intact lesion on the nicked DNA. In Myxococcus xanthus (strain DK1622), this protein is Endonuclease V.